The primary structure comprises 428 residues: Glutamate-1-semialdehyde 2,1-aminomutase 1 (428 aa).

The residue at position 267 (K267) is an N6-(pyridoxal phosphate)lysine.

The protein belongs to the class-III pyridoxal-phosphate-dependent aminotransferase family. HemL subfamily. In terms of assembly, homodimer. It depends on pyridoxal 5'-phosphate as a cofactor.

It is found in the cytoplasm. It carries out the reaction (S)-4-amino-5-oxopentanoate = 5-aminolevulinate. Its pathway is porphyrin-containing compound metabolism; protoporphyrin-IX biosynthesis; 5-aminolevulinate from L-glutamyl-tRNA(Glu): step 2/2. The polypeptide is Glutamate-1-semialdehyde 2,1-aminomutase 1 (Staphylococcus aureus (strain MW2)).